The following is a 436-amino-acid chain: 3-ketoacyl-CoA thiolase (436 aa).

Cys-99 (acyl-thioester intermediate) is an active-site residue. Residues His-392 and Cys-422 each act as proton acceptor in the active site.

This sequence belongs to the thiolase-like superfamily. Thiolase family. In terms of assembly, heterotetramer of two alpha chains (FadJ) and two beta chains (FadI).

The protein resides in the cytoplasm. It carries out the reaction an acyl-CoA + acetyl-CoA = a 3-oxoacyl-CoA + CoA. It functions in the pathway lipid metabolism; fatty acid beta-oxidation. Functionally, catalyzes the final step of fatty acid oxidation in which acetyl-CoA is released and the CoA ester of a fatty acid two carbons shorter is formed. This is 3-ketoacyl-CoA thiolase from Shewanella oneidensis (strain ATCC 700550 / JCM 31522 / CIP 106686 / LMG 19005 / NCIMB 14063 / MR-1).